Consider the following 88-residue polypeptide: MENEKGEIVDLYVPRKCSATNRIIKANDHASVQISIAKVDENGRYTGENQSYALCGFIRARGESDDSLNRLCQRDGYIRNVWSASRQR.

Belongs to the eukaryotic ribosomal protein eS21 family. In terms of assembly, component of the small ribosomal subunit. Mature ribosomes consist of a small (40S) and a large (60S) subunit. The 40S subunit contains about 33 different proteins and 1 molecule of RNA (18S). The 60S subunit contains about 49 different proteins and 3 molecules of RNA (25S, 5.8S and 5S).

The protein localises to the cytoplasm. Its function is as follows. Required for the processing of the 20S rRNA-precursor to mature 18S rRNA in a late step of the maturation of 40S ribosomal subunits. Has a physiological role leading to 18S rRNA stability. This chain is Small ribosomal subunit protein eS21 (rps21), found in Aspergillus fumigatus (strain ATCC MYA-4609 / CBS 101355 / FGSC A1100 / Af293) (Neosartorya fumigata).